The chain runs to 531 residues: Putative F-box protein At2g02890 (531 aa).

Residues 141-188 (RHSSSLTNDLIEEILSRLHSKSVARFRCVSKQCASMFASPYFKKLFQT) enclose the F-box domain.

The chain is Putative F-box protein At2g02890 from Arabidopsis thaliana (Mouse-ear cress).